The chain runs to 161 residues: ALGPFYPSRXXXXXXXXXXXXXXXXXXXXXXXXXXXXQSLFRTVLDSGISEVRSDRDQFLILLDVKHFSPEDLTVKVLDDFVEIHGKHNERQDDHGYISREFHRRYRLPSNVDQSALSCSLSADGMLTFCGXXVQSGMDASHSERAIPVSREEKPSSAPSS.

The interval 1–51 (ALGPFYPSRXXXXXXXXXXXXXXXXXXXXXXXXXXXXQSLFRTVLDSGISE) is required for complex formation with BFSP1 and BFSP2. A Deamidated glutamine; partial modification is found at Q38. The region spanning 40–150 (LFRTVLDSGI…SHSERAIPVS (111 aa)) is the sHSP domain. K87 carries the N6-acetyllysine modification. H88 contributes to the Zn(2+) binding site. Residue N89 is modified to Deamidated asparagine; partial. 2 residues coordinate Zn(2+): E90 and H95. S110 is subject to Phosphoserine. N111 is modified (deamidated asparagine; partial). An intrachain disulfide couples C119 to C130. Deamidated glutamine; partial is present on Q135. Positions 140–161 (ASHSERAIPVSREEKPSSAPSS) are disordered. Residues 141 to 155 (SHSERAIPVSREEKP) show a composition bias toward basic and acidic residues. H142 is a binding site for Zn(2+). Residue S150 is glycosylated (O-linked (GlcNAc) serine).

The protein belongs to the small heat shock protein (HSP20) family. Heteromer composed of three CRYAA and one CRYAB subunits. Inter-subunit bridging via zinc ions enhances stability, which is crucial as there is no protein turn over in the lens. Can also form homodimers and homotetramers (dimers of dimers) which serve as the building blocks of homooligomers. Within homooligomers, the zinc-binding motif is created from residues of 3 different molecules. His-88 and Glu-90 from one molecule are ligands of the zinc ion, and His-95 and His-142 residues from additional molecules complete the site with tetrahedral coordination geometry. Part of a complex required for lens intermediate filament formation composed of BFSP1, BFSP2 and CRYAA. Post-translationally, undergoes age-dependent proteolytical cleavage at the C-terminus.

Its subcellular location is the cytoplasm. It is found in the nucleus. Contributes to the transparency and refractive index of the lens. In its oxidized form (absence of intramolecular disulfide bond), acts as a chaperone, preventing aggregation of various proteins under a wide range of stress conditions. Required for the correct formation of lens intermediate filaments as part of a complex composed of BFSP1, BFSP2 and CRYAA. This Galegeeska rufescens (East African rufous sengi) protein is Alpha-crystallin A chain (CRYAA).